A 239-amino-acid chain; its full sequence is Ribonuclease 3 (239 aa).

In terms of domain architecture, RNase III spans 18 to 141 (YTTLEKALGY…LMAGVYLEAG (124 aa)). Glutamate 54 provides a ligand contact to Mg(2+). Aspartate 58 is an active-site residue. Mg(2+) is bound by residues serine 127 and glutamate 130. The active site involves glutamate 130. Positions 168 to 237 (DYKTALQELT…AYQALQKLKE (70 aa)) constitute a DRBM domain.

It belongs to the ribonuclease III family. In terms of assembly, homodimer. The cofactor is Mg(2+).

It localises to the cytoplasm. The catalysed reaction is Endonucleolytic cleavage to 5'-phosphomonoester.. Digests double-stranded RNA. Involved in the processing of primary rRNA transcript to yield the immediate precursors to the large and small rRNAs (23S and 16S). Processes some mRNAs, and tRNAs when they are encoded in the rRNA operon. Processes pre-crRNA and tracrRNA of type II CRISPR loci if present in the organism. In Helicobacter pylori (strain ATCC 700392 / 26695) (Campylobacter pylori), this protein is Ribonuclease 3.